The primary structure comprises 84 residues: Small ribosomal subunit protein uS15 (84 aa).

It belongs to the universal ribosomal protein uS15 family. As to quaternary structure, part of the 30S ribosomal subunit. Forms a bridge to the 50S subunit in the 70S ribosome, contacting the 23S rRNA.

In terms of biological role, one of the primary rRNA binding proteins, it binds directly to 16S rRNA where it helps nucleate assembly of the platform of the 30S subunit by binding and bridging several RNA helices of the 16S rRNA. Forms an intersubunit bridge (bridge B4) with the 23S rRNA of the 50S subunit in the ribosome. This is Small ribosomal subunit protein uS15 from Thermosipho africanus (strain TCF52B).